Consider the following 225-residue polypeptide: Deoxyribose-phosphate aldolase (225 aa).

Asp-96 serves as the catalytic Proton donor/acceptor. Catalysis depends on Lys-157, which acts as the Schiff-base intermediate with acetaldehyde. The active-site Proton donor/acceptor is Lys-185.

Belongs to the DeoC/FbaB aldolase family. DeoC type 1 subfamily.

It is found in the cytoplasm. It catalyses the reaction 2-deoxy-D-ribose 5-phosphate = D-glyceraldehyde 3-phosphate + acetaldehyde. It functions in the pathway carbohydrate degradation; 2-deoxy-D-ribose 1-phosphate degradation; D-glyceraldehyde 3-phosphate and acetaldehyde from 2-deoxy-alpha-D-ribose 1-phosphate: step 2/2. Functionally, catalyzes a reversible aldol reaction between acetaldehyde and D-glyceraldehyde 3-phosphate to generate 2-deoxy-D-ribose 5-phosphate. This Microcystis aeruginosa (strain NIES-843 / IAM M-2473) protein is Deoxyribose-phosphate aldolase.